We begin with the raw amino-acid sequence, 596 residues long: Endoribonuclease ZC3H12A (596 aa).

Disordered stretches follow at residues 1-48 and 97-134; these read MSDP…TSEL and QALTAPSPQPPLVPRGGSTPKPSTLEPSLPEEDREGSD. Over residues 10–19 the composition is skewed to polar residues; sequence VQESNPTMSL. The tract at residues 42-87 is ubiquitin association domain; sequence EAPTSELQMKVDFFRKLGYSSSEIHSVLQKLGVQADTNTVLGELVK. The tract at residues 81–150 is necessary for interaction with TANK; sequence VLGELVKHGS…DGSNVAMSHG (70 aa). Positions 112 to 281 are RNase; the sequence is GGSTPKPSTL…DKFMPPDDPL (170 aa). Positions 135–290 constitute an RNase NYN domain; it reads LRPVVIDGSN…LGRHGPSLDN (156 aa). The interval 214–220 is RNA binding; the sequence is RRVGGKR. Aspartate 226 is a Mg(2+) binding site. 2 disordered regions span residues 278 to 306 and 340 to 417; these read DDPLGRHGPSLDNFLRKKPLPSEHRKQPC and NALL…PTEW. The segment at 301–324 adopts a C3H1-type zinc-finger fold; that stretch reads HRKQPCPYGKKCTYGIKCRFFHPE. The segment at 301–454 is necessary for interaction with ZC3H12D; it reads HRKQPCPYGK…SELWGVRGGS (154 aa). Position 344 is a phosphoserine (serine 344). The span at 356–368 shows a compositional bias: low complexity; the sequence is QRPSPASQSSSVS. A phosphoserine mark is found at serine 435 and serine 439. The tract at residues 511 to 543 is disordered; sequence YWSEPYPLPPPTPVLQEPQRPSPGAGGGPWGRV. The segment covering 524–533 has biased composition (low complexity); the sequence is VLQEPQRPSP.

The protein belongs to the ZC3H12 family. As to quaternary structure, oligomer. Found in a deubiquitination complex with TANK, USP10 and ZC3H12A; this complex inhibits genotoxic stress- or interleukin-1-beta-mediated NF-kappaB activation by promoting IKBKG or TRAF6 deubiquitination. Interacts with IKBKG; this interaction increases in response to DNA damage. Interacts with TANK; this interaction increases in response to DNA damage and serves as a bridge to anchor both TANK and USP10 into a deubiquitinating complex. Interacts with TRAF6; this interaction increases in response to DNA damage and is stimulated by TANK. Interacts with USP10; this interaction increases in response to DNA damage and serves as a bridge to anchor both TANK and USP10 into a deubiquitinating complex. Interacts with ZC3H12D. Interacts with TNRC6A. Interacts with IKBKB/IKKB. Interacts with IKBKB/IKKB. Interacts with IKBKB/IKKB. Interacts with BTRC; the interaction occurs when ZC3H12A is phosphorylated in a IKBKB/IKKB-dependent manner. Interacts with IRAK1; this interaction increases the interaction between ZC3H12A and IKBKB/IKKB. Interacts with UPF1; this interaction occurs in a mRNA translationally active- and termination-dependent manner and is essential for ZC3H12A-mediated degradation of target mRNAs. Associates with ribosomes. Interacts with ubiquitin. Mg(2+) serves as cofactor. In terms of processing, proteolytically cleaved between Arg-111 and Arg-214 by MALT1 in activated T-cells; cleavage at Arg-111 is critical for promoting ZC3H12A degradation in response to T-cell receptor (TCR) stimulation, and hence is necessary for prolonging the stability of a set of mRNAs controlling T-cell activation and Th17 cell differentiation. Phosphorylated by IRAK1; phosphorylation is necessary for subsequent phosphorylation by the I-kappa-B-kinase (IKK) complex. Phosphorylated by I-kappa-B-kinases (IKKs) at Ser-435 and Ser-439 upon lipopolysaccharide (LPS) or IL1B stimulation in macrophages through the MyD88-dependent signaling pathway; these phosphorylations promote rapid ubiquitin proteasome-mediated degradation of ZC3H12A in macrophages and hence allows its target mRNAs, such as IL6, to escape from degradation and accumulate during the inflammatory response. Post-translationally, ubiquitinated; ubiquitination is induced in response to interleukin IL1 receptor stimuli in a IKBKB/IKKB and IRAK1-dependent manner, leading to proteasome-mediated degradation. As to expression, expressed in CD4(+) helper T-cells (at protein level). Highly expressed in macrophages. Expressed in lung, lymph nodes, spleen and thymus. Expressed weakly in heart. Expressed weakly in cardiomyocytes (at protein level). Expressed in spleen, lung, intestine, brown adipose tissue and thymus. Weakly expressed in the heart. Weakly expressed in cardiomyocytes.

It is found in the nucleus. The protein localises to the cytoplasm. The protein resides in the rough endoplasmic reticulum membrane. Its subcellular location is the cytoplasmic granule. It localises to the P-body. Endoribonuclease involved in various biological functions such as cellular inflammatory response and immune homeostasis, glial differentiation of neuroprogenitor cells, cell death of cardiomyocytes, adipogenesis and angiogenesis. Functions as an endoribonuclease involved in mRNA decay. Modulates the inflammatory response by promoting the degradation of a set of translationally active cytokine-induced inflammation-related mRNAs, such as IL6 and IL12B, during the early phase of inflammation. Prevents aberrant T-cell-mediated immune reaction by degradation of multiple mRNAs controlling T-cell activation, such as those encoding cytokines (IL6 and IL2), cell surface receptors (ICOS, TNFRSF4 and TNFR2) and transcription factor (REL). Inhibits cooperatively with ZC3H12A the differentiation of helper T cells Th17 in lungs. They repress target mRNA encoding the Th17 cell-promoting factors IL6, ICOS, REL, IRF4, NFKBID and NFKBIZ. The cooperation requires RNA-binding by RC3H1 and the nuclease activity of ZC3H12A. Together with RC3H1, destabilizes TNFRSF4/OX40 mRNA by binding to the conserved stem loop structure in its 3'UTR. Self regulates by destabilizing its own mRNA. Cleaves mRNA harboring a stem-loop (SL), often located in their 3'-UTRs, during the early phase of inflammation in a helicase UPF1-dependent manner. Plays a role in the inhibition of microRNAs (miRNAs) biogenesis. Cleaves the terminal loop of a set of precursor miRNAs (pre-miRNAs) important for the regulation of the inflammatory response leading to their degradation, and thus preventing the biosynthesis of mature miRNAs. Also plays a role in promoting angiogenesis in response to inflammatory cytokines by inhibiting the production of antiangiogenic microRNAs via its anti-dicer RNase activity. Affects the overall ubiquitination of cellular proteins. Positively regulates deubiquitinase activity promoting the cleavage at 'Lys-48'- and 'Lys-63'-linked polyubiquitin chains on TNF receptor-associated factors (TRAFs), preventing JNK and NF-kappa-B signaling pathway activation, and hence negatively regulating macrophage-mediated inflammatory response and immune homeostasis. Induces also deubiquitination of the transcription factor HIF1A, probably leading to its stabilization and nuclear import, thereby positively regulating the expression of proangiogenic HIF1A-targeted genes. Involved in a TANK-dependent negative feedback response to attenuate NF-kappaB activation through the deubiquitination of IKBKG or TRAF6 in response to interleukin-1-beta (IL1B) stimulation or upon DNA damage. Prevents stress granules (SGs) formation and promotes macrophage apoptosis under stress conditions, including arsenite-induced oxidative stress, heat shock, and energy deprivation. Plays a role in the regulation of macrophage polarization; promotes IL4-induced polarization of macrophages M1 into anti-inflammatory M2 state. May also act as a transcription factor that regulates the expression of multiple genes involved in inflammatory response, angiogenesis, adipogenesis and apoptosis. Functions as a positive regulator of glial differentiation of neuroprogenitor cells through an amyloid precursor protein (APP)-dependent signaling pathway. Attenuates septic myocardial contractile dysfunction in response to lipopolysaccharide (LPS) by reducing I-kappa-B-kinase (IKK)-mediated NF-kappa-B activation, and hence myocardial pro-inflammatory cytokine production. The protein is Endoribonuclease ZC3H12A of Mus musculus (Mouse).